Here is a 130-residue protein sequence, read N- to C-terminus: 29 kDa protein (130 aa).

The disordered stretch occupies residues 100–130 (YDGPYRPATTRPKSLVSSEDVKGASKKKNSS).

This is 29 kDa protein from Beta vulgaris (Sugar beet).